The sequence spans 187 residues: GTP cyclohydrolase 1 (187 aa).

The Zn(2+) site is built by cysteine 76, histidine 79, and cysteine 148.

The protein belongs to the GTP cyclohydrolase I family. As to quaternary structure, toroid-shaped homodecamer, composed of two pentamers of five dimers.

The catalysed reaction is GTP + H2O = 7,8-dihydroneopterin 3'-triphosphate + formate + H(+). The protein operates within cofactor biosynthesis; 7,8-dihydroneopterin triphosphate biosynthesis; 7,8-dihydroneopterin triphosphate from GTP: step 1/1. The sequence is that of GTP cyclohydrolase 1 from Streptococcus agalactiae serotype III (strain NEM316).